The chain runs to 374 residues: N5-carboxyaminoimidazole ribonucleotide synthase (374 aa).

Residues R108, K148, 153–159 (GYDGKGQ), 183–186 (EQFL), E191, H214, and 266–267 (NE) each bind ATP. Residues 112–296 (KQTLQKAGSK…QFDTHILAVT (185 aa)) form the ATP-grasp domain.

The protein belongs to the PurK/PurT family. In terms of assembly, homodimer.

The catalysed reaction is 5-amino-1-(5-phospho-beta-D-ribosyl)imidazole + hydrogencarbonate + ATP = 5-carboxyamino-1-(5-phospho-D-ribosyl)imidazole + ADP + phosphate + 2 H(+). It functions in the pathway purine metabolism; IMP biosynthesis via de novo pathway; 5-amino-1-(5-phospho-D-ribosyl)imidazole-4-carboxylate from 5-amino-1-(5-phospho-D-ribosyl)imidazole (N5-CAIR route): step 1/2. Its function is as follows. Catalyzes the ATP-dependent conversion of 5-aminoimidazole ribonucleotide (AIR) and HCO(3)(-) to N5-carboxyaminoimidazole ribonucleotide (N5-CAIR). The protein is N5-carboxyaminoimidazole ribonucleotide synthase of Staphylococcus haemolyticus (strain JCSC1435).